The sequence spans 273 residues: 2,3,4,5-tetrahydropyridine-2,6-dicarboxylate N-succinyltransferase (273 aa).

Substrate is bound by residues arginine 104 and aspartate 141.

The protein belongs to the transferase hexapeptide repeat family. As to quaternary structure, homotrimer.

It is found in the cytoplasm. It carries out the reaction (S)-2,3,4,5-tetrahydrodipicolinate + succinyl-CoA + H2O = (S)-2-succinylamino-6-oxoheptanedioate + CoA. The protein operates within amino-acid biosynthesis; L-lysine biosynthesis via DAP pathway; LL-2,6-diaminopimelate from (S)-tetrahydrodipicolinate (succinylase route): step 1/3. This chain is 2,3,4,5-tetrahydropyridine-2,6-dicarboxylate N-succinyltransferase, found in Neisseria meningitidis serogroup C (strain 053442).